Consider the following 433-residue polypeptide: Mblk-1-related factor 1 (433 aa).

The 53-residue stretch at 145-197 (NKSNILRRNYTVEDLTQAVEDIRQGKLGTRRASVVYGIPRSTLRNKIYKLEAE) folds into the HTH psq-type 1 domain. Positions 173–193 (TRRASVVYGIPRSTLRNKIYK) form a DNA-binding region, H-T-H motif. The span at 235–254 (GNQSDSSSSSPHASMCPSSP) shows a compositional bias: low complexity. 2 disordered regions span residues 235-278 (GNQS…SCSP) and 304-338 (ANISNVDTHTPTPISEKSQKMHGNEEWKRSRPKRG). Residues 304–319 (ANISNVDTHTPTPISE) are compositionally biased toward polar residues. The segment covering 320 to 332 (KSQKMHGNEEWKR) has biased composition (basic and acidic residues). Residues 334–386 (RPKRGQYRKYDKNALDEAVRSVRRGEMTVHRAGSFFGVPHSTLEYKVKERNLM) enclose the HTH psq-type 2 domain. Positions 362-382 (VHRAGSFFGVPHSTLEYKVKE) form a DNA-binding region, H-T-H motif. Residues 393 to 433 (LYSHDSSTSEDGSQLVTSTISEKSDSSSHTSTPIPFPISLV) form a disordered region. Polar residues predominate over residues 396 to 408 (HDSSTSEDGSQLV). Over residues 409 to 424 (TSTISEKSDSSSHTST) the composition is skewed to low complexity.

As to expression, expressed in AIM, RIC, AIZ, ADF, ADL, ASK, AWA, AUA, AIN, RIH (or RIR) and RIF head neurons and, in PVP, PVQ and DVA (or DVC) tail neurons, some intestinal cells, somatic gonad and vulva.

It localises to the nucleus. Functionally, may act as transcription activator. Plays a role in neurogenesis by regulating neurite pruning between left and right AIM neurons and left and right RIF neurons during larval development. Regulates olfactory plasticity. The chain is Mblk-1-related factor 1 from Caenorhabditis elegans.